The chain runs to 130 residues: Small ribosomal subunit protein uS11 (130 aa).

Belongs to the universal ribosomal protein uS11 family. As to quaternary structure, part of the 30S ribosomal subunit. Interacts with proteins S7 and S18. Binds to IF-3.

In terms of biological role, located on the platform of the 30S subunit, it bridges several disparate RNA helices of the 16S rRNA. Forms part of the Shine-Dalgarno cleft in the 70S ribosome. The chain is Small ribosomal subunit protein uS11 from Parasynechococcus marenigrum (strain WH8102).